The sequence spans 403 residues: Ribosomal RNA large subunit methyltransferase I (403 aa).

Positions 9 to 88 (YPRLVLSKGR…ESIDIAFFTR (80 aa)) constitute a PUA domain.

This sequence belongs to the methyltransferase superfamily. RlmI family.

It localises to the cytoplasm. The catalysed reaction is cytidine(1962) in 23S rRNA + S-adenosyl-L-methionine = 5-methylcytidine(1962) in 23S rRNA + S-adenosyl-L-homocysteine + H(+). Specifically methylates the cytosine at position 1962 (m5C1962) of 23S rRNA. The chain is Ribosomal RNA large subunit methyltransferase I from Salmonella paratyphi A (strain ATCC 9150 / SARB42).